We begin with the raw amino-acid sequence, 440 residues long: Xylose isomerase (440 aa).

Catalysis depends on residues histidine 101 and aspartate 104. Mg(2+) is bound by residues glutamate 232, glutamate 268, histidine 271, aspartate 296, aspartate 307, aspartate 309, and aspartate 339.

The protein belongs to the xylose isomerase family. As to quaternary structure, homotetramer. Requires Mg(2+) as cofactor.

The protein localises to the cytoplasm. It carries out the reaction alpha-D-xylose = alpha-D-xylulofuranose. This Escherichia coli (strain SE11) protein is Xylose isomerase.